The following is a 137-amino-acid chain: MLSPKRTKYRKYHRGRMRGKATRGNEVSFGKYGLQALEPSWITSRQIEATRRTITRYTKRGASLWIRIFPDKTVTARAAESRMGSGKGAVDYWVATVKPGTILFEISAVPEEVARAAFNLAAYKLPIKTKFIIRKDI.

The protein belongs to the universal ribosomal protein uL16 family. As to quaternary structure, part of the 50S ribosomal subunit.

The protein resides in the plastid. The protein localises to the chloroplast. This chain is Large ribosomal subunit protein uL16c, found in Thalassiosira pseudonana (Marine diatom).